Consider the following 152-residue polypeptide: Putative pre-16S rRNA nuclease (152 aa).

The protein belongs to the YqgF nuclease family.

It localises to the cytoplasm. Functionally, could be a nuclease involved in processing of the 5'-end of pre-16S rRNA. This is Putative pre-16S rRNA nuclease from Bifidobacterium longum (strain DJO10A).